A 342-amino-acid chain; its full sequence is Methionyl-tRNA formyltransferase (342 aa).

Residue Ser110 to Pro113 coordinates (6S)-5,6,7,8-tetrahydrofolate.

This sequence belongs to the Fmt family.

It catalyses the reaction L-methionyl-tRNA(fMet) + (6R)-10-formyltetrahydrofolate = N-formyl-L-methionyl-tRNA(fMet) + (6S)-5,6,7,8-tetrahydrofolate + H(+). Attaches a formyl group to the free amino group of methionyl-tRNA(fMet). The formyl group appears to play a dual role in the initiator identity of N-formylmethionyl-tRNA by promoting its recognition by IF2 and preventing the misappropriation of this tRNA by the elongation apparatus. In Synechococcus sp. (strain CC9311), this protein is Methionyl-tRNA formyltransferase.